Reading from the N-terminus, the 995-residue chain is Secreted protein CSS1 (995 aa).

A signal peptide spans 1 to 23 (MFNRLNKFQAALALALYSQSALG). The Methyl-accepting transducer domain maps to 26-253 (YSNSTSISSN…GVSSSGSQSV (228 aa)). Residues Asn-28 and Asn-35 are each glycosylated (N-linked (GlcNAc...) asparagine). Residues 98-276 (SSSSVSDVSS…TSSASTASGS (179 aa)) are disordered. N-linked (GlcNAc...) asparagine glycans are attached at residues Asn-468 and Asn-664.

Belongs to the SRP1/TIP1 family.

It is found in the secreted. In terms of biological role, secreted protein that may be involved in cell wall organization and biosynthesis. This Saccharomyces cerevisiae (strain ATCC 204508 / S288c) (Baker's yeast) protein is Secreted protein CSS1.